Here is a 382-residue protein sequence, read N- to C-terminus: Anthranilate O-methyltransferase 1 (382 aa).

Y20 provides a ligand contact to S-adenosyl-L-homocysteine. Anthranilate is bound at residue Q27. S-adenosyl-L-homocysteine-binding residues include C61, N66, D102, L103, S146, and Y147. W168 provides a ligand contact to anthranilate. Mg(2+) contacts are provided by E268 and F270.

This sequence belongs to the methyltransferase superfamily. Type-7 methyltransferase family. SABATH subfamily.

The catalysed reaction is anthranilate + S-adenosyl-L-methionine = O-methyl anthranilate + S-adenosyl-L-homocysteine. Functionally, methyltransferase involved in the biosynthesis of methyl anthranilate in response to stresses. Utilizes anthranilic acid as substrate, but not salicylic acid. Produces exclusively the O-methyl ester. The protein is Anthranilate O-methyltransferase 1 (AAMT1) of Zea mays (Maize).